The chain runs to 134 residues: FK506-binding protein 2 (134 aa).

A signal peptide spans 1–19 (MRILLLSALFLSLTTLVLS). Residues 39 to 127 (GDTVHMHYRG…IFETELVQIE (89 aa)) form the PPIase FKBP-type domain. Residues 131–134 (NDEL) carry the Prevents secretion from ER motif.

This sequence belongs to the FKBP-type PPIase family. FKBP2 subfamily.

It localises to the endoplasmic reticulum. The enzyme catalyses [protein]-peptidylproline (omega=180) = [protein]-peptidylproline (omega=0). Inhibited by both FK506 and rapamycin. Functionally, PPIases accelerate the folding of proteins. It catalyzes the cis-trans isomerization of proline imidic peptide bonds in oligopeptides. This Aspergillus fumigatus (strain ATCC MYA-4609 / CBS 101355 / FGSC A1100 / Af293) (Neosartorya fumigata) protein is FK506-binding protein 2 (fpr2).